The sequence spans 447 residues: Teichoic acids export ATP-binding protein TagH (447 aa).

The ABC transporter domain maps to 24–246 (DKLKTLFSVF…YRAFLHRYNH (223 aa)). Residue 60 to 67 (GLNGSGKS) participates in ATP binding. The unknown stretch occupies residues 247–447 (FTEPQKESYQ…QVLKLKEVTE (201 aa)). Positions 359 to 393 (NAVKTTKTKPASTKESRQQEEVQPSPTNVPENNNS) are disordered. Polar residues-rich tracts occupy residues 360–369 (AVKTTKTKPA) and 379–393 (EVQP…NNNS). The 45-residue stretch at 398–442 (STYTVEVGDSVSLIAENHGLTIEQLQTLNPEIIEVPIYPGQVLKL) folds into the LysM domain.

The protein belongs to the ABC transporter superfamily. Teichoic acids exporter (TC 3.A.1.104.1) family. The complex is composed of two ATP-binding proteins (TagH) and two transmembrane proteins (TagG).

It is found in the cell membrane. It catalyses the reaction ATP + H2O + teichoic acidSide 1 = ADP + phosphate + teichoic acidSide 2.. In terms of biological role, part of the ABC transporter complex TagGH involved in teichoic acids export. Responsible for energy coupling to the transport system. The chain is Teichoic acids export ATP-binding protein TagH from Enterococcus faecalis (strain ATCC 700802 / V583).